The sequence spans 355 residues: Zinc finger A20 and AN1 domain-containing stress-associated protein 3 (355 aa).

The segment at 199 to 233 adopts an A20-type zinc-finger fold; that stretch reads AGQPVLCASGCGFYGNPATLDMCSVCYRQHCLLNG. Zn(2+) contacts are provided by C205, C209, C221, C224, C295, C298, C309, C311, C316, H319, H325, and C327. An AN1-type zinc finger spans residues 289–335; sequence KAPANRCASCKKKVGLLGFACRCGATYCGTHRYPEKHACGFDFKGAS.

May be involved in environmental stress response. The protein is Zinc finger A20 and AN1 domain-containing stress-associated protein 3 (SAP3) of Oryza sativa subsp. japonica (Rice).